The sequence spans 139 residues: Two-component response regulator 24 (139 aa).

Residues 19–134 (TALVVDDSFV…KLLSILHKLN (116 aa)) form the Response regulatory domain. Position 69 is a 4-aspartylphosphate (aspartate 69).

Belongs to the ARR family. Type-A subfamily. In terms of processing, two-component system major event consists of a His-to-Asp phosphorelay between a sensor histidine kinase (HK) and a response regulator (RR). In plants, the His-to-Asp phosphorelay involves an additional intermediate named Histidine-containing phosphotransfer protein (HPt). This multistep phosphorelay consists of a His-Asp-His-Asp sequential transfer of a phosphate group between first a His and an Asp of the HK protein, followed by the transfer to a conserved His of the HPt protein and finally the transfer to an Asp in the receiver domain of the RR protein. In terms of tissue distribution, mostly expressed in flowers and siliques, primarily restricted to pollen grains.

It localises to the nucleus. In terms of biological role, functions as a response regulator involved in His-to-Asp phosphorelay signal transduction system. Phosphorylation of the Asp residue in the receiver domain activates the ability of the protein to promote the transcription of target genes. Type-A response regulators seem to act as negative regulators of the cytokinin signaling. The polypeptide is Two-component response regulator 24 (Arabidopsis thaliana (Mouse-ear cress)).